We begin with the raw amino-acid sequence, 630 residues long: 1-deoxy-D-xylulose-5-phosphate synthase (630 aa).

Thiamine diphosphate-binding positions include His72 and 113-115 (GHS). Residue Asp144 coordinates Mg(2+). Thiamine diphosphate-binding positions include 145 to 146 (GA), Asn173, Tyr284, and Glu367. Asn173 lines the Mg(2+) pocket.

It belongs to the transketolase family. DXPS subfamily. Homodimer. The cofactor is Mg(2+). It depends on thiamine diphosphate as a cofactor.

The catalysed reaction is D-glyceraldehyde 3-phosphate + pyruvate + H(+) = 1-deoxy-D-xylulose 5-phosphate + CO2. It functions in the pathway metabolic intermediate biosynthesis; 1-deoxy-D-xylulose 5-phosphate biosynthesis; 1-deoxy-D-xylulose 5-phosphate from D-glyceraldehyde 3-phosphate and pyruvate: step 1/1. Its function is as follows. Catalyzes the acyloin condensation reaction between C atoms 2 and 3 of pyruvate and glyceraldehyde 3-phosphate to yield 1-deoxy-D-xylulose-5-phosphate (DXP). The sequence is that of 1-deoxy-D-xylulose-5-phosphate synthase from Geobacillus thermodenitrificans (strain NG80-2).